The sequence spans 398 residues: Protein CDKN2AIP homolog A (398 aa).

The XRN2-binding (XTBD) domain occupies 19-124; that stretch reads LELVHGECES…KVKKRGISSS (106 aa). The segment at 118–245 is disordered; that stretch reads KRGISSSNEG…SDNALKPTRR (128 aa). Basic and acidic residues predominate over residues 131–147; it reads EPCKKQKSSDHGERESS. Polar residues-rich tracts occupy residues 154–163, 189–199, and 226–238; these read SDGNVPSTSL, RRSLPVSNAKS, and QTSM…SSDN.

This sequence belongs to the CARF family.

It localises to the nucleus. Its subcellular location is the nucleoplasm. Its function is as follows. May regulate DNA damage response and cell proliferation. The chain is Protein CDKN2AIP homolog A (cdkn2aip-a) from Xenopus laevis (African clawed frog).